Consider the following 430-residue polypeptide: Transcription factor iws-1 (430 aa).

Over residues 1–14 (MSDAASPAGSPAAE) the composition is skewed to low complexity. The segment at 1-153 (MSDAASPAGS…EENLTPDERR (153 aa)) is disordered. Basic and acidic residues predominate over residues 15-33 (PTEHRDEDQVNETHQDDGS). The span at 52-63 (VLSEIDENEFGD) shows a compositional bias: acidic residues. The span at 95-104 (KEGRRPKKRS) shows a compositional bias: basic residues. Positions 124 to 137 (VRAEGERRARKEVE) are enriched in basic and acidic residues. A TFIIS N-terminal domain is found at 244 to 321 (QSVRYFLEPL…GEWSRLILKR (78 aa)). The tract at residues 402–430 (GQAPTDHRPIGHSGHEAFRRMTQKGKGKR) is disordered. Over residues 406 to 420 (TDHRPIGHSGHEAFR) the composition is skewed to basic and acidic residues.

It belongs to the IWS1 family.

Its subcellular location is the nucleus. In terms of biological role, transcription factor involved in RNA polymerase II transcription regulation. May function in both SPT15/TBP post-recruitment and recruitment steps of transcription. The sequence is that of Transcription factor iws-1 (iws-1) from Neurospora crassa (strain ATCC 24698 / 74-OR23-1A / CBS 708.71 / DSM 1257 / FGSC 987).